We begin with the raw amino-acid sequence, 144 residues long: Granulocyte-macrophage colony-stimulating factor (144 aa).

A signal peptide spans 1–17 (MWLQSLLLLGTVACSIS). Residues Ser22, Ser24, and Ser26 are each glycosylated (O-linked (GalNAc...) serine). A glycan (O-linked (GalNAc...) threonine; partial) is linked at Thr27. 2 N-linked (GlcNAc...) asparagine glycosylation sites follow: Asn44 and Asn54. Intrachain disulfides connect Cys71-Cys113 and Cys105-Cys138.

It belongs to the GM-CSF family. Monomer. The signaling GM-CSF receptor complex is a dodecamer of two head-to-head hexamers of two alpha, two beta, and two ligand subunits.

Its subcellular location is the secreted. In terms of biological role, cytokine that stimulates the growth and differentiation of hematopoietic precursor cells from various lineages, including granulocytes, macrophages, eosinophils and erythrocytes. The protein is Granulocyte-macrophage colony-stimulating factor (CSF2) of Homo sapiens (Human).